Here is an 8922-residue protein sequence, read N- to C-terminus: Protein clarinet (8922 aa).

Residues S11 to S35 are disordered. Residues V19 to Q28 show a composition bias toward acidic residues. Positions K385–E405 form a coiled coil. 55 disordered regions span residues Q527–L579, I622–L673, L687–E860, S880–L955, E971–L1049, S1062–R1139, I1151–L1331, E1347–S1420, S1444–T1520, S1538–D1619, S1632–E1710, S1726–L1801, S1820–E1898, V1939–E1992, I2032–T2084, I2126–P2175, Q2194–L2213, I2220–D2246, S2329–E2403, S2423–L2497, S2516–E2594, S2610–E2684, S2704–F2845, S2892–K2963, E2983–L3155, E3171–L3249, S3268–L3337, S3619–D3639, A3995–I4079, I4117–T4169, S4181–I4271, Q4557–E4624, E4636–L4656, S4666–S4685, E4730–Q4801, P4855–D4899, P5004–T5036, L5360–S5379, R5390–L5413, K5484–V5511, P5540–G5572, A6194–S6303, D6354–M6437, S6487–I6510, A6577–L6609, N6668–R6691, A6728–G6768, T6998–S7018, A7045–D7098, F7137–P7175, E7202–R7263, K7313–E7350, D7598–M7623, T7760–T7797, and H7842–V7881. The span at S531–D552 shows a compositional bias: basic and acidic residues. Basic and acidic residues predominate over residues M760–A776. A compositionally biased stretch (low complexity) spans S1062–P1076. Over residues M1230 to H1244 the composition is skewed to basic and acidic residues. Residues I1251 to S1261 show a composition bias toward polar residues. Composition is skewed to basic and acidic residues over residues M1606–D1619 and M1700–E1710. Composition is skewed to basic and acidic residues over residues M1888–E1898 and M1982–E1992. Polar residues predominate over residues Q2194 to T2204. A compositionally biased stretch (basic and acidic residues) spans M2584–E2594. The segment covering M2772–A2788 has biased composition (basic and acidic residues). Residues L2793–S2803 show a composition bias toward polar residues. Residues A3076–S3085 show a composition bias toward polar residues. The span at G4035–T4044 shows a compositional bias: polar residues. Residues P4065–I4079 are compositionally biased toward basic and acidic residues. 3 stretches are compositionally biased toward polar residues: residues L4182–P4195, S4223–F4234, and M4255–I4271. A compositionally biased stretch (basic and acidic residues) spans I4571–S4580. Positions N4581–Q4594 are enriched in polar residues. Residues M4613–E4624 show a composition bias toward basic and acidic residues. The span at E4636–T4645 shows a compositional bias: polar residues. A compositionally biased stretch (polar residues) spans E4730–T4739. Positions E4871 to S4890 are enriched in low complexity. Residues E5009–T5023 show a composition bias toward polar residues. The segment covering R5390–R5407 has biased composition (low complexity). Over residues Q5486–S5499 the composition is skewed to polar residues. Residues P5540–P5550 are compositionally biased toward pro residues. Residues R5560–G5572 show a composition bias toward low complexity. Composition is skewed to polar residues over residues A6225–F6245 and K6270–R6284. Basic and acidic residues-rich tracts occupy residues K6285–S6303 and G6376–L6422. Residues L6494–S6505 show a composition bias toward polar residues. Over residues S6590–S6600 the composition is skewed to low complexity. Residues E6670–P6687 show a composition bias toward polar residues. Over residues S6735 to S6747 the composition is skewed to low complexity. 2 stretches are compositionally biased toward basic and acidic residues: residues T6998–T7008 and A7045–E7069. The segment covering S7071 to T7086 has biased composition (low complexity). The segment covering T7155–P7175 has biased composition (basic and acidic residues). Over residues S7248 to Y7260 the composition is skewed to acidic residues. Residues K7313 to P7331 are compositionally biased toward low complexity. The span at S7599–N7609 shows a compositional bias: basic and acidic residues. Low complexity-rich tracts occupy residues S7777–S7788 and A7854–S7880. Residues K7895 to E7915 adopt a coiled-coil conformation. Positions S8510–E8562 are disordered. Composition is skewed to polar residues over residues T8517–R8530 and S8541–M8551. Basic and acidic residues predominate over residues P8552 to E8562. The PDZ domain maps to R8570–K8661. The C2 domain occupies C8714 to Y8835.

In terms of tissue distribution, expressed in the nervous system.

The protein resides in the synapse. It is found in the cell projection. Its subcellular location is the axon. Its function is as follows. Required for synapse development in the active zone of presynaptic terminals of specific neurons including serotonergic NSM neurons. The active zone is a protein-dense neuronal region within the presynaptic bouton, from which synaptic vesicles send neurotransmitter signals across the synapse. Plays a role in the recruitment and clustering of synaptic vesicles in the active zone of presynaptic terminals in serotonergic NSM neurons, and coordinates the release of synaptic vesicles at presynaptic terminals to regulate neurotransmission at neuromuscular junctions. Regulates synapse number in inhibitory motor neurons and plays a role in spontaneous postsynaptic synaptic vesicle release in muscle cells. The protein is Protein clarinet of Caenorhabditis elegans.